We begin with the raw amino-acid sequence, 101 residues long: Small ribosomal subunit protein uS14 (101 aa).

Belongs to the universal ribosomal protein uS14 family. Part of the 30S ribosomal subunit. Contacts proteins S3 and S10.

Its function is as follows. Binds 16S rRNA, required for the assembly of 30S particles and may also be responsible for determining the conformation of the 16S rRNA at the A site. This is Small ribosomal subunit protein uS14 from Pelagibacter ubique (strain HTCC1062).